The chain runs to 229 residues: DNA repair protein RecO (229 aa).

The protein belongs to the RecO family.

Involved in DNA repair and RecF pathway recombination. The polypeptide is DNA repair protein RecO (Pseudomonas fluorescens (strain ATCC BAA-477 / NRRL B-23932 / Pf-5)).